The following is a 353-amino-acid chain: Photosystem II D2 protein (353 aa).

At Thr-2 the chain carries N-acetylthreonine. Thr-2 is subject to Phosphothreonine. A helical transmembrane segment spans residues 41–61 (CAYFSLGGWFTGTTFVTSWYT). His-118 contributes to the chlorophyll a binding site. A helical transmembrane segment spans residues 125–141 (GFMLRQFELARSVQLRP). Pheophytin a is bound by residues Gln-130 and Asn-143. A helical transmembrane segment spans residues 153 to 166 (VFVSVFLIYPLGQS). His-198 contacts chlorophyll a. Residues 208–228 (AALLCAIHGATVENTLFEDGD) traverse the membrane as a helical segment. 2 residues coordinate a plastoquinone: His-215 and Phe-262. His-215 contacts Fe cation. His-269 lines the Fe cation pocket. The chain crosses the membrane as a helical span at residues 279–295 (GLWMSAIGVVGLALNLR).

It belongs to the reaction center PufL/M/PsbA/D family. In terms of assembly, PSII is composed of 1 copy each of membrane proteins PsbA, PsbB, PsbC, PsbD, PsbE, PsbF, PsbH, PsbI, PsbJ, PsbK, PsbL, PsbM, PsbT, PsbX, PsbY, PsbZ, Psb30/Ycf12, at least 3 peripheral proteins of the oxygen-evolving complex and a large number of cofactors. It forms dimeric complexes. The cofactor is The D1/D2 heterodimer binds P680, chlorophylls that are the primary electron donor of PSII, and subsequent electron acceptors. It shares a non-heme iron and each subunit binds pheophytin, quinone, additional chlorophylls, carotenoids and lipids. There is also a Cl(-1) ion associated with D1 and D2, which is required for oxygen evolution. The PSII complex binds additional chlorophylls, carotenoids and specific lipids..

The protein resides in the plastid. The protein localises to the chloroplast thylakoid membrane. It carries out the reaction 2 a plastoquinone + 4 hnu + 2 H2O = 2 a plastoquinol + O2. Photosystem II (PSII) is a light-driven water:plastoquinone oxidoreductase that uses light energy to abstract electrons from H(2)O, generating O(2) and a proton gradient subsequently used for ATP formation. It consists of a core antenna complex that captures photons, and an electron transfer chain that converts photonic excitation into a charge separation. The D1/D2 (PsbA/PsbD) reaction center heterodimer binds P680, the primary electron donor of PSII as well as several subsequent electron acceptors. D2 is needed for assembly of a stable PSII complex. This Physcomitrium patens (Spreading-leaved earth moss) protein is Photosystem II D2 protein.